A 466-amino-acid polypeptide reads, in one-letter code: MNGGTFTPGKEKERAGIYFNFKTTAENRVSAGERGTVALPIASSWGEVKKFISISSIEDLNKKVGLNIDDPSLLLLREAMKKANTVLLYRLTEGLRASADISEGVKATALYGGTKGNDIIISITENVIDSSKVDVTTYLDQSEVDKQTVSKAEELKPNKYVTFTGKGDLTVTIPLTGTAPEDVSGALPATSGIRLSGGTDKTPTNADYTAFLEAAETEYFDTIALPVEDNEQLKATFVAFIKRLRDNQGQKVQGVLSNYKGDHEGIINVTGGVLLEDGTEITPEKATAWVAGASAGATFNQSLTFVEYEGAVDVLNRIDNDEIVERLSNGEFLFTYDSRDKSVSVEKDINSLTSLTAEKNKMFQKNKIVRVLDAINNDLTSQLKALIKSRKASGSDVPATNDGLQFVKTLITQYLSVLQDNEGITDFDSENDITIALNNDRDGFLIDLAVQPVDAAEKFYFNVEVK.

This sequence belongs to the myoviridae tail sheath protein family.

This is an uncharacterized protein from Bacillus subtilis (strain 168).